Consider the following 360-residue polypeptide: S-adenosylmethionine:tRNA ribosyltransferase-isomerase (360 aa).

The protein belongs to the QueA family. As to quaternary structure, monomer.

The protein localises to the cytoplasm. It carries out the reaction 7-aminomethyl-7-carbaguanosine(34) in tRNA + S-adenosyl-L-methionine = epoxyqueuosine(34) in tRNA + adenine + L-methionine + 2 H(+). It participates in tRNA modification; tRNA-queuosine biosynthesis. Functionally, transfers and isomerizes the ribose moiety from AdoMet to the 7-aminomethyl group of 7-deazaguanine (preQ1-tRNA) to give epoxyqueuosine (oQ-tRNA). The chain is S-adenosylmethionine:tRNA ribosyltransferase-isomerase from Nitrobacter winogradskyi (strain ATCC 25391 / DSM 10237 / CIP 104748 / NCIMB 11846 / Nb-255).